Here is a 419-residue protein sequence, read N- to C-terminus: MASSNRRVLVNGGGPAGAVTAFWLAKGGFEVVVTERSMSRPYGQGVDVTGRASDIIKKMGLEQRIRDSTTGEAGLTVVDDQGEDVAPPLGTAPIEGGTASVTQEIEIMRRDLTKIFVDAAEALPNVTFRYGCTVDEVQQHEKSITAVLSDTGKPEDFTAIIGADGLGSAIRKLTFDPEINRRSVSPTNTYVAFFSIPGDPKYDTPVGKLQHANKGRGILVRPIDKKGTQRSCYLMSQSDSQELAQVARTGSQEDQKALLDNRFREFTGPLGKRAVEGMHSADDFYFTRIVQIKLDSWHSGRAALVGDAGYSPSPLTGQGTTLAIIGAYVLAGEMAKSPDDLERAFTSYYAILNKFVSESQEIPFGGQAPKLILPQSDWGIWLLRTFYKIISWTGIWRLLNFGNETVKVELPEYDFGGLD.

This sequence belongs to the aromatic-ring hydroxylase family. KMO subfamily.

The protein operates within mycotoxin biosynthesis. Functionally, monooxygenase; part of the gene cluster that mediates the biosynthesis of cercosporin, a light-activated, non-host-selective toxin. The perylenequinone chromophore of cercosporin absorbs light energy to attain an electronically-activated triplet state and produces active oxygen species such as the hydroxyl radical, superoxide, hydrogen peroxide or singlet oxygen upon reaction with oxygen molecules. These reactive oxygen species cause damage to various cellular components including lipids, proteins and nucleic acids. The first step of cercosporin biosynthesis is performed by the polyketide synthase CTB1 which catalyzes the formation of nor-toralactone. The starter unit acyltransferase (SAT) domain of CTB1 initiates polyketide extension by the selective utilization of acetyl-CoA, which is elongated to the heptaketide in the beta-ketoacyl synthase (KS) domain by successive condensations with six malonyl units introduced by the malonyl acyltransferase (MAT) domain. The product template (PT) domain catalyzes C4-C9 and C2-C11 aldol cyclizations and dehydrations to a trihydroxynaphthalene, which is thought to be delivered to the thioesterase (TE) domain for product release. The bifunctional enzyme CTB3 then methylates nor-toralactone to toralactone before conducting an unusual oxidative aromatic ring opening. The O-methyltransferase CTB2 further methylates the nascent OH-6 of the CBT3 product, blocking further oxidation at this site before the reductase CTB6 reduces the 2-oxopropyl ketone at position C7, giving naphthalene. The FAD-dependent monooxygenase CTB5 in concert with the multicopper oxidase CTB12 are responsible for homodimerization of naphthalene with CTB7 installing the dioxepine moiety, finally producing cercosporin. The fasciclin domain-containing protein CTB11 might act with CTB5 and CTB12 whereas the roles of CTB9 and CTB10 have still to be elucidated. This chain is Monooxygenase CTB7, found in Cercospora beticola (Sugarbeet leaf spot fungus).